Reading from the N-terminus, the 294-residue chain is uncharacterized protein (294 aa).

Disordered stretches follow at residues 1–30 (MKRQRPQDSMISVPLQNENSTTTPTKEVSH), 51–86 (ALSDITPDTPPAFKTPYSSLPYNLVPQNSSTSKKRP), and 250–294 (DELN…STST). 3 stretches are compositionally biased toward polar residues: residues 7–26 (QDSMISVPLQNENSTTTPTK), 66–81 (PYSSLPYNLVPQNSST), and 255–277 (PMNNNDTPITNSTHSAQMSNLPT).

It localises to the nucleus. This is an uncharacterized protein from Schizosaccharomyces pombe (strain 972 / ATCC 24843) (Fission yeast).